The primary structure comprises 196 residues: Adenylyl-sulfate kinase (196 aa).

Residue 31–38 coordinates ATP; sequence GLSGAGKS. Serine 105 (phosphoserine intermediate) is an active-site residue.

This sequence belongs to the APS kinase family.

It carries out the reaction adenosine 5'-phosphosulfate + ATP = 3'-phosphoadenylyl sulfate + ADP + H(+). It participates in sulfur metabolism; hydrogen sulfide biosynthesis; sulfite from sulfate: step 2/3. Catalyzes the synthesis of activated sulfate. In Aeromonas salmonicida (strain A449), this protein is Adenylyl-sulfate kinase.